Reading from the N-terminus, the 397-residue chain is Succinate--CoA ligase [ADP-forming] subunit beta (397 aa).

Positions lysine 9–glutamate 254 constitute an ATP-grasp domain. Residues lysine 46, glycine 53 to glycine 55, glutamate 109, serine 112, and glutamate 117 each bind ATP. Asparagine 209 and aspartate 223 together coordinate Mg(2+). Substrate is bound by residues asparagine 274 and glycine 331–methionine 333.

The protein belongs to the succinate/malate CoA ligase beta subunit family. Heterotetramer of two alpha and two beta subunits. Mg(2+) is required as a cofactor.

The catalysed reaction is succinate + ATP + CoA = succinyl-CoA + ADP + phosphate. It catalyses the reaction GTP + succinate + CoA = succinyl-CoA + GDP + phosphate. It participates in carbohydrate metabolism; tricarboxylic acid cycle; succinate from succinyl-CoA (ligase route): step 1/1. In terms of biological role, succinyl-CoA synthetase functions in the citric acid cycle (TCA), coupling the hydrolysis of succinyl-CoA to the synthesis of either ATP or GTP and thus represents the only step of substrate-level phosphorylation in the TCA. The beta subunit provides nucleotide specificity of the enzyme and binds the substrate succinate, while the binding sites for coenzyme A and phosphate are found in the alpha subunit. This chain is Succinate--CoA ligase [ADP-forming] subunit beta, found in Nitrobacter hamburgensis (strain DSM 10229 / NCIMB 13809 / X14).